We begin with the raw amino-acid sequence, 93 residues long: Cell division protein CrgA (93 aa).

2 helical membrane-spanning segments follow: residues 31–51 (VWFV…LMVF) and 70–90 (LGPW…LLTM).

The protein belongs to the CrgA family.

The protein resides in the cell membrane. Functionally, involved in cell division. This is Cell division protein CrgA from Mycobacterium marinum (strain ATCC BAA-535 / M).